Consider the following 150-residue polypeptide: D-aminoacyl-tRNA deacylase (150 aa).

The Gly-cisPro motif, important for rejection of L-amino acids motif lies at 138–139 (GP).

This sequence belongs to the DTD family. Homodimer.

It localises to the cytoplasm. It carries out the reaction glycyl-tRNA(Ala) + H2O = tRNA(Ala) + glycine + H(+). The enzyme catalyses a D-aminoacyl-tRNA + H2O = a tRNA + a D-alpha-amino acid + H(+). In terms of biological role, an aminoacyl-tRNA editing enzyme that deacylates mischarged D-aminoacyl-tRNAs. Also deacylates mischarged glycyl-tRNA(Ala), protecting cells against glycine mischarging by AlaRS. Acts via tRNA-based rather than protein-based catalysis; rejects L-amino acids rather than detecting D-amino acids in the active site. By recycling D-aminoacyl-tRNA to D-amino acids and free tRNA molecules, this enzyme counteracts the toxicity associated with the formation of D-aminoacyl-tRNA entities in vivo and helps enforce protein L-homochirality. This chain is D-aminoacyl-tRNA deacylase, found in Opitutus terrae (strain DSM 11246 / JCM 15787 / PB90-1).